Reading from the N-terminus, the 89-residue chain is ATP synthase subunit H, mitochondrial (89 aa).

As to quaternary structure, F-type ATP synthases have 2 components, the catalytic core F(1) and the membrane-embedded component F(0), linked together by a central stalk and a peripheral stalk. The central stalk, also called rotor shaft, is often seen as part of F(1). The peripheral stalk is seen as part of F(0). F(0) contains the membrane channel next to the rotor. F-type ATP synthases form dimers but each monomer functions independently in ATP generation. The dimer consists of 18 different polypeptides: ATP1 (subunit alpha, part of F(1), 3 molecules per monomer), ATP2 (subunit beta, part of F(1), 3 molecules per monomer), ATP3 (subunit gamma, part of the central stalk), ATP4 (subunit b, part of the peripheral stalk), ATP5/OSCP (subunit 5/OSCP, part of the peripheral stalk), ATP6 (subunit a, part of the peripheral stalk), ATP7 (subunit d, part of the peripheral stalk), ATP8 (subunit 8, part of the peripheral stalk), OLI1 (subunit c, part of the rotor, 10 molecules per monomer), ATP14 (subunit H, part of the peripheral stalk), ATP15 (subunit epsilon, part of the central stalk), ATP16 (subunit delta, part of the central stalk), ATP17 (subunit f, part of the peripheral stalk), ATP18 (subunit i/j, part of the peripheral stalk). Dimer-specific subunits are ATP19 (subunit k, at interface between monomers), ATP20 (subunit g, at interface between monomers), TIM11 (subunit e, at interface between monomers). Also contains subunit L.

Its subcellular location is the mitochondrion inner membrane. In terms of biological role, mitochondrial membrane ATP synthase (F(1)F(0) ATP synthase or Complex V) produces ATP from ADP in the presence of a proton gradient across the membrane which is generated by electron transport complexes of the respiratory chain. F-type ATP synthases consist of two structural domains, F(1) - containing the extramembraneous catalytic core, and F(0) - containing the membrane proton channel, linked together by a central stalk and a peripheral stalk. During catalysis, ATP synthesis in the catalytic domain of F(1) is coupled via a rotary mechanism of the central stalk subunits to proton translocation. Part of the peripheral stalk. In Pichia angusta (Yeast), this protein is ATP synthase subunit H, mitochondrial.